The following is a 98-amino-acid chain: NADH-ubiquinone oxidoreductase chain 4L (98 aa).

A run of 3 helical transmembrane segments spans residues 1 to 21, 29 to 49, and 61 to 81; these read MSMMYFNIFMAFTVSLVGLLM, SLLCLEGMMLSLFVMMSVTIL, and IILLVFAACEAALGLSLLVMV.

It belongs to the complex I subunit 4L family. In terms of assembly, core subunit of respiratory chain NADH dehydrogenase (Complex I) which is composed of 45 different subunits.

It is found in the mitochondrion inner membrane. It catalyses the reaction a ubiquinone + NADH + 5 H(+)(in) = a ubiquinol + NAD(+) + 4 H(+)(out). Core subunit of the mitochondrial membrane respiratory chain NADH dehydrogenase (Complex I) which catalyzes electron transfer from NADH through the respiratory chain, using ubiquinone as an electron acceptor. Part of the enzyme membrane arm which is embedded in the lipid bilayer and involved in proton translocation. The protein is NADH-ubiquinone oxidoreductase chain 4L (MT-ND4L) of Zalophus californianus (California sealion).